We begin with the raw amino-acid sequence, 842 residues long: Protein translocase subunit SecA 1 (842 aa).

ATP is bound by residues glutamine 85, glycine 103 to threonine 107, and aspartate 493. Zn(2+) contacts are provided by cysteine 824, cysteine 826, cysteine 835, and histidine 836.

It belongs to the SecA family. In terms of assembly, monomer and homodimer. Part of the essential Sec protein translocation apparatus which comprises SecA, SecYEG and auxiliary proteins SecDF. Other proteins may also be involved. Requires Zn(2+) as cofactor.

It localises to the cell membrane. It is found in the cytoplasm. The enzyme catalyses ATP + H2O + cellular proteinSide 1 = ADP + phosphate + cellular proteinSide 2.. Part of the Sec protein translocase complex. Interacts with the SecYEG preprotein conducting channel. Has a central role in coupling the hydrolysis of ATP to the transfer of proteins into and across the cell membrane, serving as an ATP-driven molecular motor driving the stepwise translocation of polypeptide chains across the membrane. The protein is Protein translocase subunit SecA 1 of Streptococcus agalactiae serotype Ia (strain ATCC 27591 / A909 / CDC SS700).